A 158-amino-acid chain; its full sequence is 6,7-dimethyl-8-ribityllumazine synthase (158 aa).

Residues F24, 58–60 (AFE), and 82–84 (AVI) contribute to the 5-amino-6-(D-ribitylamino)uracil site. 87–88 (GT) serves as a coordination point for (2S)-2-hydroxy-3-oxobutyl phosphate. Residue H90 is the Proton donor of the active site. F115 contacts 5-amino-6-(D-ribitylamino)uracil. R129 serves as a coordination point for (2S)-2-hydroxy-3-oxobutyl phosphate.

Belongs to the DMRL synthase family. Forms an icosahedral capsid composed of 60 subunits, arranged as a dodecamer of pentamers.

The catalysed reaction is (2S)-2-hydroxy-3-oxobutyl phosphate + 5-amino-6-(D-ribitylamino)uracil = 6,7-dimethyl-8-(1-D-ribityl)lumazine + phosphate + 2 H2O + H(+). The protein operates within cofactor biosynthesis; riboflavin biosynthesis; riboflavin from 2-hydroxy-3-oxobutyl phosphate and 5-amino-6-(D-ribitylamino)uracil: step 1/2. Functionally, catalyzes the formation of 6,7-dimethyl-8-ribityllumazine by condensation of 5-amino-6-(D-ribitylamino)uracil with 3,4-dihydroxy-2-butanone 4-phosphate. This is the penultimate step in the biosynthesis of riboflavin. The sequence is that of 6,7-dimethyl-8-ribityllumazine synthase from Azotobacter vinelandii (strain DJ / ATCC BAA-1303).